The sequence spans 283 residues: Extensin (283 aa).

The signal sequence occupies residues 1–24; it reads MMGGKAALLLALVAVTLAVVEIQA. Positions 27-283 are disordered; sequence GYGYGGGYPT…PPPPPPPPYY (257 aa). Positions 36–45 are enriched in pro residues; that stretch reads TPTPKPPAKG. Positions 46–69 are enriched in basic and acidic residues; the sequence is PKPEKPPTKGHGHKPEKPPKEHKP. 2 stretches are compositionally biased toward pro residues: residues 70 to 264 and 272 to 283; these read TPPT…PTYT and SSPPPPPPPPYY.

In terms of processing, hydroxylated on proline residues in the S-P-P-P-P repeat. Post-translationally, O-glycosylated on hydroxyprolines.

It is found in the secreted. It localises to the primary cell wall. In terms of biological role, structural component in primary cell wall. The sequence is that of Extensin (HRGP) from Sorghum bicolor (Sorghum).